A 447-amino-acid chain; its full sequence is UDP-N-acetylmuramoylalanine--D-glutamate ligase (447 aa).

112 to 118 is a binding site for ATP; sequence GTNGKST.

The protein belongs to the MurCDEF family.

It localises to the cytoplasm. It carries out the reaction UDP-N-acetyl-alpha-D-muramoyl-L-alanine + D-glutamate + ATP = UDP-N-acetyl-alpha-D-muramoyl-L-alanyl-D-glutamate + ADP + phosphate + H(+). It functions in the pathway cell wall biogenesis; peptidoglycan biosynthesis. In terms of biological role, cell wall formation. Catalyzes the addition of glutamate to the nucleotide precursor UDP-N-acetylmuramoyl-L-alanine (UMA). The chain is UDP-N-acetylmuramoylalanine--D-glutamate ligase from Legionella pneumophila (strain Lens).